The chain runs to 479 residues: Ribosomal RNA small subunit methyltransferase F (479 aa).

Residues 125-131 (AAAPGSK), Glu149, Asp176, and Asp194 contribute to the S-adenosyl-L-methionine site. The active-site Nucleophile is Cys247.

It belongs to the class I-like SAM-binding methyltransferase superfamily. RsmB/NOP family.

It localises to the cytoplasm. It carries out the reaction cytidine(1407) in 16S rRNA + S-adenosyl-L-methionine = 5-methylcytidine(1407) in 16S rRNA + S-adenosyl-L-homocysteine + H(+). Specifically methylates the cytosine at position 1407 (m5C1407) of 16S rRNA. The chain is Ribosomal RNA small subunit methyltransferase F from Salmonella paratyphi B (strain ATCC BAA-1250 / SPB7).